A 137-amino-acid polypeptide reads, in one-letter code: MIWKRHLTLDELNATSQNTLVAHLGIVYTRLGDDVLEAEMPVDARTHQPFGLLHGGASAALAETLGSMAGYLMTRDGQCVVGTELNATHHRAVSQGKVRGVCLPLHLGRQNQSWEITLFDEQGRRCCTCRLGTAVMG.

The Nucleophile or proton acceptor role is filled by E63.

It belongs to the thioesterase PaaI family. As to quaternary structure, homotetramer. Dimer of dimers. Interacts specifically with the aryl carrier protein (ArCP) domain of EntB.

The protein localises to the cytoplasm. Its pathway is siderophore biosynthesis; enterobactin biosynthesis. Required for optimal enterobactin synthesis. Acts as a proofreading enzyme that prevents EntB misacylation by hydrolyzing the thioester bound existing between EntB and wrongly charged molecules. This Salmonella paratyphi B (strain ATCC BAA-1250 / SPB7) protein is Proofreading thioesterase EntH.